The sequence spans 101 residues: Small nuclear ribonucleoprotein Sm D3 (101 aa).

The region spanning 6–78 (IPVKLLNEAQ…IKFIVVPDLL (73 aa)) is the Sm domain.

It belongs to the snRNP core protein family. In terms of assembly, component of the Sm core complex, present in spliceosomal snRNP U1, U2, U4/U6 and U5. The core complex contains SMB1, SMD1, SMD2, SMD3, SME1, SMX3 and SMX2 (Sm proteins B, D1, D2, D3, E, F and G, respectively), and is probably a heptameric ring structure. SMD3 specifically interacts with SMB1. Belongs to the CWC complex (or CEF1-associated complex), a spliceosome sub-complex reminiscent of a late-stage spliceosome composed of the U2, U5 and U6 snRNAs and at least BUD13, BUD31, BRR2, CDC40, CEF1, CLF1, CUS1, CWC2, CWC15, CWC21, CWC22, CWC23, CWC24, CWC25, CWC27, ECM2, HSH155, IST3, ISY1, LEA1, MSL1, NTC20, PRP8, PRP9, PRP11, PRP19, PRP21, PRP22, PRP45, PRP46, SLU7, SMB1, SMD1, SMD2, SMD3, SMX2, SMX3, SNT309, SNU114, SPP2, SYF1, SYF2, RSE1 and YJU2. Component of the U4/U6-U5 tri-snRNP complex composed of the U4, U6 and U5 snRNAs and at least PRP3, PRP4, PRP6, PRP8, PRP18, PRP31, PRP38, SNU13, SNU23, SNU66, SNU114, SPP381, SMB1, SMD1, SMD2, SMD3, SMX2, SMX3, LSM2, LSM3, LSM4, LSM5, LSM6, LSM7, LSM8, BRR2 and DIB1.

The protein localises to the cytoplasm. It is found in the cytosol. Its subcellular location is the nucleus. In terms of biological role, plays a role in pre-mRNA splicing as a core component of the spliceosomal U1, U2, U4 and U5 small nuclear ribonucleoproteins (snRNPs), the building blocks of the spliceosome. Also binds telomerase RNA and is required for its accumulation. This Saccharomyces cerevisiae (strain ATCC 204508 / S288c) (Baker's yeast) protein is Small nuclear ribonucleoprotein Sm D3 (SMD3).